The sequence spans 261 residues: Sulfur carrier protein FdhD (261 aa).

C105 serves as the catalytic Cysteine persulfide intermediate. 245–250 contacts Mo-bis(molybdopterin guanine dinucleotide); the sequence is FIRGDR.

This sequence belongs to the FdhD family.

It localises to the cytoplasm. Required for formate dehydrogenase (FDH) activity. Acts as a sulfur carrier protein that transfers sulfur from IscS to the molybdenum cofactor prior to its insertion into FDH. This chain is Sulfur carrier protein FdhD, found in Listeria innocua serovar 6a (strain ATCC BAA-680 / CLIP 11262).